Here is a 2071-residue protein sequence, read N- to C-terminus: GTPase-activating protein BEM2 (2071 aa).

Disordered regions lie at residues 1 to 115 (MPLK…QAHK) and 171 to 195 (AAPAREGRYSHQPTASLSSIGSERP). Composition is skewed to low complexity over residues 16–31 (PQSCASKPSSASQSSC) and 42–55 (SSISSNSSPNSKNN). The span at 62–80 (SNGSVYSDETTLKTAQTHY) shows a compositional bias: polar residues. Residues 81–110 (TQQGQQAKPQQHTQQQQQQPQTPMQLQVPT) are compositionally biased toward low complexity. Positions 181–191 (HQPTASLSSIG) are enriched in polar residues. The 268-residue stretch at 471–738 (DTEKVANQIH…MEMSLKMEPP (268 aa)) folds into the Ras-GEF domain. A compositionally biased stretch (polar residues) spans 787–811 (PSTKNNNSSQASNRISQLSVNSTPH). 3 disordered regions span residues 787 to 819 (PSTKNNNSSQASNRISQLSVNSTPHSNASSSSA), 1645 to 1676 (RSVLIQHPNKVSVSSASSSVSGSSSGSTARTS), and 1702 to 1738 (SVSSRSSVISNTATATSPASGASPNQTSTSHHGGMGK). 2 stretches are compositionally biased toward low complexity: residues 1656-1676 (SVSSASSSVSGSSSGSTARTS) and 1702-1726 (SVSSRSSVISNTATATSPASGASPN). One can recognise a PH domain in the interval 1751-1853 (SGFTSSSSQY…WMKAITLSKR (103 aa)). In terms of domain architecture, Rho-GAP spans 1872–2070 (VPVEDVCERE…HLIRNPEHYF (199 aa)).

In terms of biological role, GTPase-activating protein (GAP) for RHO proteins. Required for polarized growth and maintenance of cell polarity. This chain is GTPase-activating protein BEM2 (BEM2), found in Eremothecium gossypii (strain ATCC 10895 / CBS 109.51 / FGSC 9923 / NRRL Y-1056) (Yeast).